The primary structure comprises 312 residues: Aspartate carbamoyltransferase catalytic subunit (312 aa).

Residues R55 and T56 each contribute to the carbamoyl phosphate site. L-aspartate is bound at residue K83. The carbamoyl phosphate site is built by R105, H138, and Q141. Residues R171 and R225 each coordinate L-aspartate. Residues G266 and P267 each contribute to the carbamoyl phosphate site.

Belongs to the aspartate/ornithine carbamoyltransferase superfamily. ATCase family. Heterododecamer (2C3:3R2) of six catalytic PyrB chains organized as two trimers (C3), and six regulatory PyrI chains organized as three dimers (R2).

The enzyme catalyses carbamoyl phosphate + L-aspartate = N-carbamoyl-L-aspartate + phosphate + H(+). It participates in pyrimidine metabolism; UMP biosynthesis via de novo pathway; (S)-dihydroorotate from bicarbonate: step 2/3. In terms of biological role, catalyzes the condensation of carbamoyl phosphate and aspartate to form carbamoyl aspartate and inorganic phosphate, the committed step in the de novo pyrimidine nucleotide biosynthesis pathway. The polypeptide is Aspartate carbamoyltransferase catalytic subunit (Corynebacterium glutamicum (strain R)).